Here is a 425-residue protein sequence, read N- to C-terminus: L-cysteine:1D-myo-inositol 2-amino-2-deoxy-alpha-D-glucopyranoside ligase (425 aa).

Residue Cys43 coordinates Zn(2+). L-cysteinyl-5'-AMP is bound by residues 43 to 46 (CGIT), Thr58, and 81 to 83 (NVT). Positions 45 to 55 (ITPYDATHIGH) match the 'HIGH' region motif. The short motif at 195–200 (ERGGDP) is the 'ERGGDP' region element. Trp236 contributes to the L-cysteinyl-5'-AMP binding site. Cys240 provides a ligand contact to Zn(2+). An L-cysteinyl-5'-AMP-binding site is contributed by 258–260 (GSD). His265 is a binding site for Zn(2+). Val295 is an L-cysteinyl-5'-AMP binding site. The 'KMSKS' region motif lies at 301-305 (KMSKS).

It belongs to the class-I aminoacyl-tRNA synthetase family. MshC subfamily. As to quaternary structure, monomer. Requires Zn(2+) as cofactor.

It carries out the reaction 1D-myo-inositol 2-amino-2-deoxy-alpha-D-glucopyranoside + L-cysteine + ATP = 1D-myo-inositol 2-(L-cysteinylamino)-2-deoxy-alpha-D-glucopyranoside + AMP + diphosphate + H(+). Functionally, catalyzes the ATP-dependent condensation of GlcN-Ins and L-cysteine to form L-Cys-GlcN-Ins. The polypeptide is L-cysteine:1D-myo-inositol 2-amino-2-deoxy-alpha-D-glucopyranoside ligase (Sanguibacter keddieii (strain ATCC 51767 / DSM 10542 / NCFB 3025 / ST-74)).